The primary structure comprises 1238 residues: Chitin synthase 4 (1238 aa).

Disordered stretches follow at residues 1–93 (MAEP…PERN) and 132–190 (TVSS…RRQK). The segment covering 14 to 34 (TRDKSHSPYRESPSRRLRDVE) has biased composition (basic and acidic residues). A glycan (N-linked (GlcNAc...) asparagine) is linked at Asn-50. Polar residues-rich tracts occupy residues 71 to 80 (SNPNPMSQSD) and 133 to 142 (VSSGSTQQDT). Over residues 175–190 (RKDTRNLTEEEKRRQK) the composition is skewed to basic and acidic residues. N-linked (GlcNAc...) asparagine glycosylation is present at Asn-180. Helical transmembrane passes span 200-220 (IWNIYCAVVTFWAPDCLLQCF) and 235-255 (VGLISIILLIAAFVGFLTFGF). N-linked (GlcNAc...) asparagine glycosylation is found at Asn-365, Asn-404, and Asn-426. A helical membrane pass occupies residues 487–507 (VVLYVSLVFILAIVAAKFFLA). Disordered stretches follow at residues 548 to 570 (PKITDPASTVTGSDGRTSKRGSM) and 582 to 606 (YAVDRRSSRPPPTTMTSQSSNAKLL). Over residues 553-562 (PASTVTGSDG) the composition is skewed to polar residues. Asn-617, Asn-903, and Asn-1030 each carry an N-linked (GlcNAc...) asparagine glycan. A run of 3 helical transmembrane segments spans residues 1062–1082 (IGTLVLPAAISFTFYLIILSI), 1087–1107 (VPVIPLVLLALILGLPAILIV), and 1115–1135 (YILWMGIYLLSLPIWNFVLPA).

The protein belongs to the chitin synthase family. Class IV subfamily. Post-translationally, maximal activity requires trypsin activation, suggesting a zymogenic nature.

Its subcellular location is the cell membrane. It carries out the reaction [(1-&gt;4)-N-acetyl-beta-D-glucosaminyl](n) + UDP-N-acetyl-alpha-D-glucosamine = [(1-&gt;4)-N-acetyl-beta-D-glucosaminyl](n+1) + UDP + H(+). Activity is stimulated by Mg(2+), and is more inhibited by polyoxin D than by nikkomycin. Polymerizes chitin, a structural polymer of the cell wall and septum, by transferring the sugar moiety of UDP-GlcNAc to the non-reducing end of the growing chitin polymer. CHS4 synthesizes a large amount of chitin and appears to play a role in the process of cell separation. CHS4 is particularly well suited for functioning at the higher temperatures associated with its poorly characterized saprophic environment and with human infection. The sequence is that of Chitin synthase 4 from Exophiala dermatitidis (Black yeast-like fungus).